A 136-amino-acid polypeptide reads, in one-letter code: Serine--glyoxylate aminotransferase (136 aa).

Belongs to the class-V pyridoxal-phosphate-dependent aminotransferase family. As to quaternary structure, homodimer. Requires pyridoxal 5'-phosphate as cofactor. Expressed in leaves but not in root tissue or seedlings.

It is found in the peroxisome. The enzyme catalyses glyoxylate + L-serine = 3-hydroxypyruvate + glycine. It carries out the reaction glyoxylate + L-alanine = glycine + pyruvate. With respect to regulation, inhibited by aminooxyacetate. This chain is Serine--glyoxylate aminotransferase, found in Zea mays (Maize).